The chain runs to 112 residues: T cell receptor alpha variable 9-1 (112 aa).

The N-terminal stretch at 1 to 20 (MNSSPGPAIALFLMFGGING) is a signal peptide. Positions 21 to 112 (DSVVQTEGQV…DSAVYFCALS (92 aa)) constitute an Ig-like domain. Residue N41 is glycosylated (N-linked (GlcNAc...) asparagine). A disulfide bond links C42 and C109.

Alpha-beta TR is a heterodimer composed of an alpha and beta chain; disulfide-linked. The alpha-beta TR is associated with the transmembrane signaling CD3 coreceptor proteins to form the TR-CD3 (TcR or TCR). The assembly of alpha-beta TR heterodimers with CD3 occurs in the endoplasmic reticulum where a single alpha-beta TR heterodimer associates with one CD3D-CD3E heterodimer, one CD3G-CD3E heterodimer and one CD247 homodimer forming a stable octameric structure. CD3D-CD3E and CD3G-CD3E heterodimers preferentially associate with TR alpha and TR beta chains, respectively. The association of the CD247 homodimer is the last step of TcR assembly in the endoplasmic reticulum and is required for transport to the cell surface.

It localises to the cell membrane. Its function is as follows. V region of the variable domain of T cell receptor (TR) alpha chain that participates in the antigen recognition. Alpha-beta T cell receptors are antigen specific receptors which are essential to the immune response and are present on the cell surface of T lymphocytes. Recognize peptide-major histocompatibility (MH) (pMH) complexes that are displayed by antigen presenting cells (APC), a prerequisite for efficient T cell adaptive immunity against pathogens. Binding of alpha-beta TR to pMH complex initiates TR-CD3 clustering on the cell surface and intracellular activation of LCK that phosphorylates the ITAM motifs of CD3G, CD3D, CD3E and CD247 enabling the recruitment of ZAP70. In turn ZAP70 phosphorylates LAT, which recruits numerous signaling molecules to form the LAT signalosome. The LAT signalosome propagates signal branching to three major signaling pathways, the calcium, the mitogen-activated protein kinase (MAPK) kinase and the nuclear factor NF-kappa-B (NF-kB) pathways, leading to the mobilization of transcription factors that are critical for gene expression and essential for T cell growth and differentiation. The T cell repertoire is generated in the thymus, by V-(D)-J rearrangement. This repertoire is then shaped by intrathymic selection events to generate a peripheral T cell pool of self-MH restricted, non-autoaggressive T cells. Post-thymic interaction of alpha-beta TR with the pMH complexes shapes TR structural and functional avidity. The chain is T cell receptor alpha variable 9-1 from Homo sapiens (Human).